A 306-amino-acid chain; its full sequence is Phosphatidate cytidylyltransferase (306 aa).

Positions 1–28 (MTTNDAGTGNPAEQPARGAKQQPATETS) are disordered. Transmembrane regions (helical) follow at residues 36 to 56 (AAIV…VFVP), 82 to 102 (GYLI…WLTW), 103 to 123 (PFGA…CMIW), 151 to 171 (ATVF…MLVY), 180 to 200 (FCMM…GVLF), 218 to 238 (FAGS…FLVG), 241 to 261 (PWIG…GDLV), and 285 to 305 (MDRL…LTLL).

The protein belongs to the CDS family.

Its subcellular location is the cell membrane. It catalyses the reaction a 1,2-diacyl-sn-glycero-3-phosphate + CTP + H(+) = a CDP-1,2-diacyl-sn-glycerol + diphosphate. It functions in the pathway phospholipid metabolism; CDP-diacylglycerol biosynthesis; CDP-diacylglycerol from sn-glycerol 3-phosphate: step 3/3. The chain is Phosphatidate cytidylyltransferase (cdsA) from Mycobacterium bovis (strain ATCC BAA-935 / AF2122/97).